We begin with the raw amino-acid sequence, 232 residues long: MVDTALHPIPGRRTPPHPRSTLPLTTPPAAAELFGDNLDKAIAYHESLATDGSVRGFIGPREIPRLWDRHILNCGVIGEAMEEGISVADVGSGAGLPGIPLAIARPDLKIILIEPLLKRSVYLGEVIEQLGLDNVSVIRGRAEEKAVRKQVGHVDVVTSRAVAPLGRLASWSLPLAKVGGRMIAMKGASVAEEIERDAKAIRNAGGGEVKVFTVGGELLDEPTTLISIRREK.

The segment at 1–24 (MVDTALHPIPGRRTPPHPRSTLPL) is disordered. S-adenosyl-L-methionine contacts are provided by residues glycine 91, leucine 96, 142 to 143 (AE), and arginine 160.

This sequence belongs to the methyltransferase superfamily. RNA methyltransferase RsmG family.

The protein resides in the cytoplasm. Functionally, specifically methylates the N7 position of guanine in position 518 of 16S rRNA. In Corynebacterium efficiens (strain DSM 44549 / YS-314 / AJ 12310 / JCM 11189 / NBRC 100395), this protein is Ribosomal RNA small subunit methyltransferase G.